Reading from the N-terminus, the 72-residue chain is UPF0352 protein Patl_3379 (72 aa).

This sequence belongs to the UPF0352 family.

The protein is UPF0352 protein Patl_3379 of Pseudoalteromonas atlantica (strain T6c / ATCC BAA-1087).